Reading from the N-terminus, the 758-residue chain is 5-methyltetrahydropteroyltriglutamate--homocysteine methyltransferase (758 aa).

5-methyltetrahydropteroyltri-L-glutamate contacts are provided by residues 16 to 19 and lysine 112; that span reads RELK. L-homocysteine is bound by residues 433–435 and glutamate 486; that span reads IGS. Residues 433 to 435 and glutamate 486 each bind L-methionine; that span reads IGS. Residues 517–518 and tryptophan 563 each bind 5-methyltetrahydropteroyltri-L-glutamate; that span reads RC. Residue aspartate 601 participates in L-homocysteine binding. An L-methionine-binding site is contributed by aspartate 601. Position 607 (glutamate 607) interacts with 5-methyltetrahydropteroyltri-L-glutamate. 3 residues coordinate Zn(2+): histidine 643, cysteine 645, and glutamate 667. Residue histidine 696 is the Proton donor of the active site. Cysteine 728 serves as a coordination point for Zn(2+).

Belongs to the vitamin-B12 independent methionine synthase family. Zn(2+) is required as a cofactor.

The catalysed reaction is 5-methyltetrahydropteroyltri-L-glutamate + L-homocysteine = tetrahydropteroyltri-L-glutamate + L-methionine. Its pathway is amino-acid biosynthesis; L-methionine biosynthesis via de novo pathway; L-methionine from L-homocysteine (MetE route): step 1/1. Catalyzes the transfer of a methyl group from 5-methyltetrahydrofolate to homocysteine resulting in methionine formation. The protein is 5-methyltetrahydropteroyltriglutamate--homocysteine methyltransferase of Neisseria meningitidis serogroup A / serotype 4A (strain DSM 15465 / Z2491).